We begin with the raw amino-acid sequence, 185 residues long: uncharacterized protein (185 aa).

2 helical membrane passes run 1–21 and 111–131; these read MMKFLLILIFLASFSFSLTPE and FLWIITGIFTTLTASVIAFAW.

It to A.aeolicus aq_1900.

It localises to the cell membrane. This is an uncharacterized protein from Aquifex aeolicus (strain VF5).